We begin with the raw amino-acid sequence, 298 residues long: PYK10-binding protein 1 (298 aa).

N-acetylalanine is present on alanine 2. Jacalin-type lectin domains are found at residues 2-142 (AQKV…YFAP) and 152-295 (AKQL…HVRP). Residue serine 20 is modified to Phosphoserine.

This sequence belongs to the jacalin lectin family. As to quaternary structure, component of the PYK10 complex, at least composed of PYK10/BGLU23, BGLU21, BGLU22, JAL22, JAL23, PBP1/JAL30, PBP2/JAL31, JAL32, JAL33, JAL34, JAL35, GLL22 and GLL23. As to expression, expressed exclusively in roots.

Its subcellular location is the cytoplasm. Functionally, inhibitor-type lectin that may regulate the correct polymerization of BGLU23/PYK10 upon tissue damage. Activates BGLU21, BGLU22 and BGLU23. This is PYK10-binding protein 1 (PBP1) from Arabidopsis thaliana (Mouse-ear cress).